Consider the following 795-residue polypeptide: Protocadherin beta-5 (795 aa).

The signal sequence occupies residues 1-30 (METALAKTPQKRQVMFLAILLLLWEAGSEA). The Extracellular segment spans residues 31–689 (VRYSIPEETE…AQADSLTVYL (659 aa)). 5 Cadherin domains span residues 35–133 (IPEE…SPEF), 138–242 (MLLK…APEF), 247–346 (YEVQ…APEL), 351–450 (LSSP…APAF), and 455–560 (YTLF…SPFV). Asparagine 169 carries N-linked (GlcNAc...) asparagine glycosylation. The residue at position 296 (lysine 296) is an N6-acetyllysine. Asparagine 417 and asparagine 435 each carry an N-linked (GlcNAc...) asparagine glycan. N-linked (GlcNAc...) asparagine glycosylation is present at asparagine 566. Residues 567 to 670 (GSAPCTELVP…LVDGFSQPYL (104 aa)) form the Cadherin 6 domain. The chain crosses the membrane as a helical span at residues 690–710 (VVALASVSSLFLFSVLLFVAV). Over 711-795 (RLCRRSRAAP…AAFRNSFGLN (85 aa)) the chain is Cytoplasmic.

Its subcellular location is the cell membrane. Potential calcium-dependent cell-adhesion protein. May be involved in the establishment and maintenance of specific neuronal connections in the brain. This is Protocadherin beta-5 (PCDHB5) from Pan troglodytes (Chimpanzee).